Reading from the N-terminus, the 71-residue chain is Exodeoxyribonuclease 7 small subunit (71 aa).

This sequence belongs to the XseB family. As to quaternary structure, heterooligomer composed of large and small subunits.

The protein resides in the cytoplasm. The catalysed reaction is Exonucleolytic cleavage in either 5'- to 3'- or 3'- to 5'-direction to yield nucleoside 5'-phosphates.. Bidirectionally degrades single-stranded DNA into large acid-insoluble oligonucleotides, which are then degraded further into small acid-soluble oligonucleotides. The protein is Exodeoxyribonuclease 7 small subunit of Streptococcus uberis (strain ATCC BAA-854 / 0140J).